We begin with the raw amino-acid sequence, 444 residues long: Phosphoglucosamine mutase (444 aa).

The Phosphoserine intermediate role is filled by Ser-102. Residues Ser-102, Asp-241, Asp-243, and Asp-245 each contribute to the Mg(2+) site. Ser-102 carries the phosphoserine modification.

This sequence belongs to the phosphohexose mutase family. Mg(2+) is required as a cofactor. Post-translationally, activated by phosphorylation.

It catalyses the reaction alpha-D-glucosamine 1-phosphate = D-glucosamine 6-phosphate. Functionally, catalyzes the conversion of glucosamine-6-phosphate to glucosamine-1-phosphate. In Acidovorax sp. (strain JS42), this protein is Phosphoglucosamine mutase.